The chain runs to 129 residues: Protein RALF-like 34 (129 aa).

An N-terminal signal peptide occupies residues 1-23; sequence MAASSLNLLLILSLLTFISLQRS. A propeptide spans 24-76 (removed in mature form); sequence ESLSDNPSLTLLPDGFDWPISHSDEFDIIDGEESFEVTEEDDGVTDRRSLYWR. 2 disulfide bridges follow: C94–C107 and C121–C127.

The protein belongs to the plant rapid alkalinization factor (RALF) family. Post-translationally, proteolytically cleaved, probably by S1P, a subtilisin-like serine protease (subtilase). As to expression, expressed in roots, stems and leaves.

The protein localises to the secreted. Its function is as follows. Cell signaling peptide that may regulate plant stress, growth, and development. Mediates a rapid alkalinization of extracellular space by mediating a transient increase in the cytoplasmic Ca(2+) concentration leading to a calcium-dependent signaling events through a cell surface receptor and a concomitant activation of some intracellular mitogen-activated protein kinases. The sequence is that of Protein RALF-like 34 (RALFL34) from Arabidopsis thaliana (Mouse-ear cress).